We begin with the raw amino-acid sequence, 725 residues long: Ribosomal RNA large subunit methyltransferase K/L (725 aa).

The 112-residue stretch at 46 to 157 (VAYRLCLWSR…RGQATLSLDL (112 aa)) folds into the THUMP domain. Positions 393–412 (TGERGERNDDGQARAPSEPA) are disordered. The span at 395–404 (ERGERNDDGQ) shows a compositional bias: basic and acidic residues.

It belongs to the methyltransferase superfamily. RlmKL family.

The protein resides in the cytoplasm. The catalysed reaction is guanosine(2445) in 23S rRNA + S-adenosyl-L-methionine = N(2)-methylguanosine(2445) in 23S rRNA + S-adenosyl-L-homocysteine + H(+). It carries out the reaction guanosine(2069) in 23S rRNA + S-adenosyl-L-methionine = N(2)-methylguanosine(2069) in 23S rRNA + S-adenosyl-L-homocysteine + H(+). Its function is as follows. Specifically methylates the guanine in position 2445 (m2G2445) and the guanine in position 2069 (m7G2069) of 23S rRNA. The sequence is that of Ribosomal RNA large subunit methyltransferase K/L from Pseudomonas paraeruginosa (strain DSM 24068 / PA7) (Pseudomonas aeruginosa (strain PA7)).